Consider the following 302-residue polypeptide: NAD kinase 2 (302 aa).

The Proton acceptor role is filled by Asp78. NAD(+)-binding positions include Asp78–Gly79, Asn152–Glu153, Asp182, Thr193–Ser198, and Ala217.

This sequence belongs to the NAD kinase family. It depends on a divalent metal cation as a cofactor.

The protein resides in the cytoplasm. It catalyses the reaction NAD(+) + ATP = ADP + NADP(+) + H(+). In terms of biological role, involved in the regulation of the intracellular balance of NAD and NADP, and is a key enzyme in the biosynthesis of NADP. Catalyzes specifically the phosphorylation on 2'-hydroxyl of the adenosine moiety of NAD to yield NADP. The protein is NAD kinase 2 of Parasynechococcus marenigrum (strain WH8102).